Consider the following 234-residue polypeptide: Ribosome maturation protein SDO1 homolog (234 aa).

It belongs to the SDO1/SBDS family.

This is Ribosome maturation protein SDO1 homolog from Archaeoglobus fulgidus (strain ATCC 49558 / DSM 4304 / JCM 9628 / NBRC 100126 / VC-16).